The primary structure comprises 283 residues: Protein/nucleic acid deglycase HchA (283 aa).

Zn(2+) is bound by residues His86, Glu91, and His123. Residue Cys185 is the Nucleophile of the active site.

Belongs to the peptidase C56 family. HchA subfamily. As to quaternary structure, homodimer.

It is found in the cytoplasm. It carries out the reaction N(omega)-(1-hydroxy-2-oxopropyl)-L-arginyl-[protein] + H2O = lactate + L-arginyl-[protein] + H(+). The catalysed reaction is N(6)-(1-hydroxy-2-oxopropyl)-L-lysyl-[protein] + H2O = lactate + L-lysyl-[protein] + H(+). It catalyses the reaction S-(1-hydroxy-2-oxopropyl)-L-cysteinyl-[protein] + H2O = lactate + L-cysteinyl-[protein] + H(+). The enzyme catalyses N(omega)-(1-hydroxy-2-oxoethyl)-L-arginyl-[protein] + H2O = L-arginyl-[protein] + glycolate + H(+). It carries out the reaction N(6)-(1-hydroxy-2-oxoethyl)-L-lysyl-[protein] + H2O = glycolate + L-lysyl-[protein] + H(+). The catalysed reaction is S-(1-hydroxy-2-oxoethyl)-L-cysteinyl-[protein] + H2O = glycolate + L-cysteinyl-[protein] + H(+). It catalyses the reaction N(2)-(1-hydroxy-2-oxopropyl)-dGTP + H2O = lactate + dGTP + H(+). The enzyme catalyses N(2)-(1-hydroxy-2-oxopropyl)-GTP + H2O = lactate + GTP + H(+). It carries out the reaction N(2)-(1-hydroxy-2-oxopropyl)-GDP + H2O = lactate + GDP + H(+). The catalysed reaction is N(2)-(1-hydroxy-2-oxopropyl)-GMP + H2O = lactate + GMP + H(+). It catalyses the reaction N(2)-(1-hydroxy-2-oxoethyl)-dGTP + H2O = dGTP + glycolate + H(+). The enzyme catalyses N(2)-(1-hydroxy-2-oxoethyl)-GTP + H2O = glycolate + GTP + H(+). It carries out the reaction N(2)-(1-hydroxy-2-oxoethyl)-GDP + H2O = glycolate + GDP + H(+). The catalysed reaction is N(2)-(1-hydroxy-2-oxoethyl)-GMP + H2O = glycolate + GMP + H(+). It catalyses the reaction an N(2)-(1-hydroxy-2-oxopropyl)-guanosine in RNA + H2O = a guanosine in RNA + lactate + H(+). The enzyme catalyses an N(2)-(1-hydroxy-2-oxopropyl)-2'-deoxyguanosine in DNA + H2O = a 2'-deoxyguanosine in DNA + lactate + H(+). It carries out the reaction an N(2)-(1-hydroxy-2-oxoethyl)-guanosine in RNA + H2O = a guanosine in RNA + glycolate + H(+). The catalysed reaction is an N(2)-(1-hydroxy-2-oxoethyl)-2'-deoxyguanosine in DNA + H2O = a 2'-deoxyguanosine in DNA + glycolate + H(+). Its function is as follows. Protein and nucleotide deglycase that catalyzes the deglycation of the Maillard adducts formed between amino groups of proteins or nucleotides and reactive carbonyl groups of glyoxals. Thus, functions as a protein deglycase that repairs methylglyoxal- and glyoxal-glycated proteins, and releases repaired proteins and lactate or glycolate, respectively. Deglycates cysteine, arginine and lysine residues in proteins, and thus reactivates these proteins by reversing glycation by glyoxals. Acts on early glycation intermediates (hemithioacetals and aminocarbinols), preventing the formation of Schiff bases and advanced glycation endproducts (AGE). Also functions as a nucleotide deglycase able to repair glycated guanine in the free nucleotide pool (GTP, GDP, GMP, dGTP) and in DNA and RNA. Is thus involved in a major nucleotide repair system named guanine glycation repair (GG repair), dedicated to reversing methylglyoxal and glyoxal damage via nucleotide sanitization and direct nucleic acid repair. Plays an important role in protecting cells from carbonyl stress. The polypeptide is Protein/nucleic acid deglycase HchA (Escherichia coli O81 (strain ED1a)).